The sequence spans 899 residues: Protein translocase subunit SecA (899 aa).

ATP-binding positions include Q87, 105–109 (GEGKT), and D516. Zn(2+) contacts are provided by C884, C886, C895, and H896.

Belongs to the SecA family. As to quaternary structure, monomer and homodimer. Part of the essential Sec protein translocation apparatus which comprises SecA, SecYEG and auxiliary proteins SecDF. Other proteins may also be involved. It depends on Zn(2+) as a cofactor.

It localises to the cell inner membrane. It is found in the cytoplasm. The catalysed reaction is ATP + H2O + cellular proteinSide 1 = ADP + phosphate + cellular proteinSide 2.. In terms of biological role, part of the Sec protein translocase complex. Interacts with the SecYEG preprotein conducting channel. Has a central role in coupling the hydrolysis of ATP to the transfer of proteins into and across the cell membrane, serving as an ATP-driven molecular motor driving the stepwise translocation of polypeptide chains across the membrane. The chain is Protein translocase subunit SecA from Borreliella burgdorferi (strain ATCC 35210 / DSM 4680 / CIP 102532 / B31) (Borrelia burgdorferi).